Here is a 227-residue protein sequence, read N- to C-terminus: Cytochrome c oxidase subunit 2 (227 aa).

Over 1–14 (MAYPFQLGLQDATS) the chain is Mitochondrial intermembrane. The helical transmembrane segment at 15–45 (PIMEELLHFHDHALMIVFLISSLVLYIISLM) threads the bilayer. Residues 46–59 (LTTKLTHTSTMDAQ) lie on the Mitochondrial matrix side of the membrane. The chain crosses the membrane as a helical span at residues 60–87 (EVETVWTILPAIILILIALPSLRILYMM). Residues 88–227 (DEINNPSLTV…YFETWSALMV (140 aa)) lie on the Mitochondrial intermembrane side of the membrane. Cu cation contacts are provided by His161, Cys196, Glu198, Cys200, His204, and Met207. Glu198 lines the Mg(2+) pocket. Tyr218 bears the Phosphotyrosine mark.

The protein belongs to the cytochrome c oxidase subunit 2 family. As to quaternary structure, component of the cytochrome c oxidase (complex IV, CIV), a multisubunit enzyme composed of 14 subunits. The complex is composed of a catalytic core of 3 subunits MT-CO1, MT-CO2 and MT-CO3, encoded in the mitochondrial DNA, and 11 supernumerary subunits COX4I, COX5A, COX5B, COX6A, COX6B, COX6C, COX7A, COX7B, COX7C, COX8 and NDUFA4, which are encoded in the nuclear genome. The complex exists as a monomer or a dimer and forms supercomplexes (SCs) in the inner mitochondrial membrane with NADH-ubiquinone oxidoreductase (complex I, CI) and ubiquinol-cytochrome c oxidoreductase (cytochrome b-c1 complex, complex III, CIII), resulting in different assemblies (supercomplex SCI(1)III(2)IV(1) and megacomplex MCI(2)III(2)IV(2)). Found in a complex with TMEM177, COA6, COX18, COX20, SCO1 and SCO2. Interacts with TMEM177 in a COX20-dependent manner. Interacts with COX20. Interacts with COX16. Requires Cu cation as cofactor.

It is found in the mitochondrion inner membrane. It catalyses the reaction 4 Fe(II)-[cytochrome c] + O2 + 8 H(+)(in) = 4 Fe(III)-[cytochrome c] + 2 H2O + 4 H(+)(out). Component of the cytochrome c oxidase, the last enzyme in the mitochondrial electron transport chain which drives oxidative phosphorylation. The respiratory chain contains 3 multisubunit complexes succinate dehydrogenase (complex II, CII), ubiquinol-cytochrome c oxidoreductase (cytochrome b-c1 complex, complex III, CIII) and cytochrome c oxidase (complex IV, CIV), that cooperate to transfer electrons derived from NADH and succinate to molecular oxygen, creating an electrochemical gradient over the inner membrane that drives transmembrane transport and the ATP synthase. Cytochrome c oxidase is the component of the respiratory chain that catalyzes the reduction of oxygen to water. Electrons originating from reduced cytochrome c in the intermembrane space (IMS) are transferred via the dinuclear copper A center (CU(A)) of subunit 2 and heme A of subunit 1 to the active site in subunit 1, a binuclear center (BNC) formed by heme A3 and copper B (CU(B)). The BNC reduces molecular oxygen to 2 water molecules using 4 electrons from cytochrome c in the IMS and 4 protons from the mitochondrial matrix. The protein is Cytochrome c oxidase subunit 2 (MT-CO2) of Canis aureus (Golden jackal).